The sequence spans 195 residues: uncharacterized protein (195 aa).

The region spanning 10–70 is the HTH tetR-type domain; the sequence is EETVARLLQA…ATAYEVLRRQ (61 aa). Positions 33–52 form a DNA-binding region, H-T-H motif; sequence SAAVITKRAGVSVGALFRHF.

This is an uncharacterized protein from Mycobacterium tuberculosis (strain CDC 1551 / Oshkosh).